The primary structure comprises 963 residues: Reversion-inducing cysteine-rich protein with Kazal motifs (963 aa).

The first 28 residues, Met-1–Gly-28, serve as a signal peptide directing secretion. One copy of the Knot 1 repeat lies at Cys-31–Cys-78. Residues Cys-31–Cys-332 form a 5 X Knot repeats region. Asn-80 is a glycosylation site (N-linked (GlcNAc...) asparagine). 2 Knot repeats span residues Cys-98–Cys-135 and Cys-145–Cys-191. Asn-194 is a glycosylation site (N-linked (GlcNAc...) asparagine). Knot repeat units follow at residues Cys-210–Cys-257 and Cys-286–Cys-332. 2 N-linked (GlcNAc...) asparagine glycosylation sites follow: Asn-291 and Asn-346. Kazal-like domains are found at residues Lys-621–Ser-667, Ser-692–Pro-746, and Lys-749–Ala-783. Intrachain disulfides connect Cys-627/Cys-652, Cys-629/Cys-648, Cys-637/Cys-665, Cys-710/Cys-729, Cys-718/Cys-744, and Cys-755/Cys-781. Ser-936 carries the GPI-anchor amidated serine lipid modification. Positions Pro-937–Ile-963 are excised as a propeptide.

This sequence belongs to the RECK family. In terms of assembly, interacts (via knot repeats) with WNT7A (via disordered linker region); the interaction is direct. Interacts (via knot repeats) with WNT7B (via disordered linker region); the interaction is direct. Interacts with ADGRA2; the interaction is direct. Localizes to the plasma membrane via its GPI-anchor. Released from the plasma membrane following cleavage of the GPI-anchor by GDPD5/GPE2.

The protein localises to the cell membrane. Its function is as follows. Functions together with ADGRA2 to enable brain endothelial cells to selectively respond to Wnt7 signals (WNT7A or WNT7B). Plays a key role in Wnt7-specific responses: required for central nervous system (CNS) angiogenesis and blood-brain barrier regulation. Acts as a Wnt7-specific coactivator of canonical Wnt signaling by decoding Wnt ligands: acts by interacting specifically with the disordered linker region of Wnt7, thereby conferring ligand selectivity for Wnt7. ADGRA2 is then required to deliver RECK-bound Wnt7 to frizzled by assembling a higher-order RECK-ADGRA2-Fzd-LRP5-LRP6 complex. Also acts as a serine protease inhibitor. This Gallus gallus (Chicken) protein is Reversion-inducing cysteine-rich protein with Kazal motifs.